Consider the following 266-residue polypeptide: Apolipoprotein A-I (266 aa).

Residues 1 to 18 form the signal peptide; the sequence is MKAVVLTLAVLFLTGSQA. 2 tandem repeats follow at residues 67–88 and 89–110. The tract at residues 67 to 266 is 10 X approximate tandem repeats; that stretch reads LKLLDNWDTL…DEATKKLNAQ (200 aa). M109 is subject to Methionine sulfoxide. Residues 111–121 form a 3; half-length repeat; sequence KDLEEVKQKVQ. Repeat copies occupy residues 122–143, 144–165, 166–187, 188–209, and 210–231. The stretch at 232–242 is one 9; half-length repeat; the sequence is PALEDLRQGLL. Repeat unit 10 spans residues 243–266; it reads PVLESFKVGLMAIVDEATKKLNAQ.

The protein belongs to the apolipoprotein A1/A4/E family. Homodimer. Interacts with APOA1BP and CLU. Component of a sperm activating protein complex (SPAP), consisting of APOA1, an immunoglobulin heavy chain, an immunoglobulin light chain and albumin. Interacts with NDRG1. Interacts with SCGB3A2. Interacts with NAXE and YJEFN3. Glycosylated. Post-translationally, palmitoylated. In terms of processing, phosphorylation sites are present in the extracellular medium.

It is found in the secreted. Its function is as follows. Participates in the reverse transport of cholesterol from tissues to the liver for excretion by promoting cholesterol efflux from tissues and by acting as a cofactor for the lecithin cholesterol acyltransferase (LCAT). As part of the SPAP complex, activates spermatozoa motility. The sequence is that of Apolipoprotein A-I (APOA1) from Acinonyx jubatus (Cheetah).